Consider the following 127-residue polypeptide: MAQSVPPGDIHTQPGSKIVFNAPYDDKHTYHIKITNAGGRRIGWAIKTTNMKRLGVDPPCGVLDPKENVLMAVSCDTFDATREDINNDRITIEWTNTPDGAAKQFRREWFQGDGMVRRKNLPIEYNL.

Alanine 2 bears the N-acetylalanine mark. The 118-residue stretch at 9–126 (DIHTQPGSKI…RRKNLPIEYN (118 aa)) folds into the MSP domain.

In terms of tissue distribution, sperm.

It is found in the cell projection. It localises to the pseudopodium. The protein localises to the cytoplasm. The protein resides in the cytoskeleton. Functionally, central component in molecular interactions underlying sperm crawling. Forms an extensive filament system that extends from sperm villipoda, along the leading edge of the pseudopod. This chain is Major sperm protein 2, found in Onchocerca volvulus.